Consider the following 75-residue polypeptide: Cytoplasmic envelopment protein 3 (75 aa).

Residue glycine 2 is the site of N-myristoyl glycine; by host attachment. Residues 53–65 are compositionally biased toward acidic residues; that stretch reads EGLEYDEDSENDE. The disordered stretch occupies residues 53–75; sequence EGLEYDEDSENDELLFLPNKKPN.

Belongs to the herpesviridae cytoplasmic envelopment protein 3 family. In terms of assembly, interacts with BGLF2; this interaction is essential for the proper localization of each protein to the assembly complex and thus for the production of infectious virus. Myristoylation and palmitoylation (probably on one or more of the nearby cysteines at the N-terminus) enable membrane-binding and Golgi apparatus-specific targeting and are essential for efficient packaging. Post-translationally, phosphorylated. Phosphorylation does not seem to be required for recycling to the host Golgi apparatus. Packaging is selective for underphosphorylated forms.

Its subcellular location is the virion tegument. The protein localises to the virion membrane. The protein resides in the host cell membrane. It localises to the host Golgi apparatus membrane. Functionally, plays an important role in the cytoplasmic envelopment of tegument proteins and capsids during the assembly and egress processes. Also participates in viral entry at the fusion step probably by regulating the core fusion machinery. This chain is Cytoplasmic envelopment protein 3, found in Homo sapiens (Human).